The primary structure comprises 487 residues: Glutamyl-tRNA(Gln) amidotransferase subunit A (487 aa).

Residues Lys79 and Ser154 each act as charge relay system in the active site. Ser178 serves as the catalytic Acyl-ester intermediate.

Belongs to the amidase family. GatA subfamily. As to quaternary structure, heterotrimer of A, B and C subunits.

The enzyme catalyses L-glutamyl-tRNA(Gln) + L-glutamine + ATP + H2O = L-glutaminyl-tRNA(Gln) + L-glutamate + ADP + phosphate + H(+). Functionally, allows the formation of correctly charged Gln-tRNA(Gln) through the transamidation of misacylated Glu-tRNA(Gln) in organisms which lack glutaminyl-tRNA synthetase. The reaction takes place in the presence of glutamine and ATP through an activated gamma-phospho-Glu-tRNA(Gln). This is Glutamyl-tRNA(Gln) amidotransferase subunit A from Roseiflexus sp. (strain RS-1).